An 85-amino-acid polypeptide reads, in one-letter code: Dr hemagglutinin AFA-III operon regulatory protein AfaF (85 aa).

The protein to E.coli PapI and DaaF.

Functionally, may have a possible regulatory function on the expression of the other AFA-III genes. This Escherichia coli protein is Dr hemagglutinin AFA-III operon regulatory protein AfaF (afaF).